The following is a 123-amino-acid chain: Small ribosomal subunit protein uS12cz/uS12cy (123 aa).

Belongs to the universal ribosomal protein uS12 family. As to quaternary structure, part of the 30S ribosomal subunit.

Its subcellular location is the plastid. The protein resides in the chloroplast. Functionally, with S4 and S5 plays an important role in translational accuracy. Located at the interface of the 30S and 50S subunits. The chain is Small ribosomal subunit protein uS12cz/uS12cy (rps12-A) from Daucus carota (Wild carrot).